Here is a 96-residue protein sequence, read N- to C-terminus: C-C motif chemokine 20 (96 aa).

Residues Met1 to Ala26 form the signal peptide. 2 disulfides stabilise this stretch: Cys32–Cys58 and Cys33–Cys74.

This sequence belongs to the intercrine beta (chemokine CC) family. C-terminal processed forms which lack 1, 3 or 6 amino acids are produced by proteolytic cleavage after secretion from peripheral blood monocytes. In terms of tissue distribution, expressed in the seminal plasma, endometrial fluid and follicular fluid (at protein level). Expressed predominantly in the liver, lymph nodes, appendix, peripheral blood lymphocytes, and fetal lung. Low levels seen in thymus, prostate, testis, small intestine and colon.

The protein resides in the secreted. Its function is as follows. Acts as a ligand for C-C chemokine receptor CCR6. Signals through binding and activation of CCR6 and induces a strong chemotactic response and mobilization of intracellular calcium ions. The ligand-receptor pair CCL20-CCR6 is responsible for the chemotaxis of dendritic cells (DC), effector/memory T-cells and B-cells and plays an important role at skin and mucosal surfaces under homeostatic and inflammatory conditions, as well as in pathology, including cancer and various autoimmune diseases. CCL20 acts as a chemotactic factor that attracts lymphocytes and, slightly, neutrophils, but not monocytes. Involved in the recruitment of both the pro-inflammatory IL17 producing helper T-cells (Th17) and the regulatory T-cells (Treg) to sites of inflammation. Required for optimal migration of thymic natural regulatory T cells (nTregs) and DN1 early thymocyte progenitor cells. C-terminal processed forms have been shown to be equally chemotactically active for leukocytes. Positively regulates sperm motility and chemotaxis via its binding to CCR6 which triggers Ca2+ mobilization in the sperm which is important for its motility. Inhibits proliferation of myeloid progenitors in colony formation assays. May be involved in formation and function of the mucosal lymphoid tissues by attracting lymphocytes and dendritic cells towards epithelial cells. Possesses antibacterial activity towards E.coli ATCC 25922 and S.aureus ATCC 29213. The polypeptide is C-C motif chemokine 20 (CCL20) (Homo sapiens (Human)).